Reading from the N-terminus, the 462-residue chain is Asparagine--tRNA ligase (462 aa).

The protein belongs to the class-II aminoacyl-tRNA synthetase family. As to quaternary structure, homodimer.

The protein resides in the cytoplasm. The catalysed reaction is tRNA(Asn) + L-asparagine + ATP = L-asparaginyl-tRNA(Asn) + AMP + diphosphate + H(+). This Thermosynechococcus vestitus (strain NIES-2133 / IAM M-273 / BP-1) protein is Asparagine--tRNA ligase.